The chain runs to 220 residues: N-(5'-phosphoribosyl)anthranilate isomerase (220 aa).

It belongs to the TrpF family.

The enzyme catalyses N-(5-phospho-beta-D-ribosyl)anthranilate = 1-(2-carboxyphenylamino)-1-deoxy-D-ribulose 5-phosphate. Its pathway is amino-acid biosynthesis; L-tryptophan biosynthesis; L-tryptophan from chorismate: step 3/5. In Gloeothece citriformis (strain PCC 7424) (Cyanothece sp. (strain PCC 7424)), this protein is N-(5'-phosphoribosyl)anthranilate isomerase.